Here is a 61-residue protein sequence, read N- to C-terminus: MAVPKRKTSPSKRGMRRSADALKASTYVEDKNSGELRRPHHIDLKTGMYRGRQVLTPKESA.

Residues 1-16 show a composition bias toward basic residues; the sequence is MAVPKRKTSPSKRGMR. The tract at residues 1–41 is disordered; sequence MAVPKRKTSPSKRGMRRSADALKASTYVEDKNSGELRRPHH. The segment covering 28–41 has biased composition (basic and acidic residues); that stretch reads VEDKNSGELRRPHH.

The protein belongs to the bacterial ribosomal protein bL32 family.

The sequence is that of Large ribosomal subunit protein bL32 from Rhizobium rhizogenes (strain K84 / ATCC BAA-868) (Agrobacterium radiobacter).